A 502-amino-acid polypeptide reads, in one-letter code: ATP synthase subunit alpha (502 aa).

Residue 170 to 177 (GDRKTGKT) coordinates ATP.

It belongs to the ATPase alpha/beta chains family. As to quaternary structure, F-type ATPases have 2 components, CF(1) - the catalytic core - and CF(0) - the membrane proton channel. CF(1) has five subunits: alpha(3), beta(3), gamma(1), delta(1), epsilon(1). CF(0) has four main subunits: a, b, b' and c.

It is found in the cellular thylakoid membrane. It catalyses the reaction ATP + H2O + 4 H(+)(in) = ADP + phosphate + 5 H(+)(out). In terms of biological role, produces ATP from ADP in the presence of a proton gradient across the membrane. The alpha chain is a regulatory subunit. The chain is ATP synthase subunit alpha from Microcystis aeruginosa (strain NIES-843 / IAM M-2473).